Consider the following 239-residue polypeptide: Gag polyprotein (239 aa).

Residues 124-141 are compositionally biased toward basic and acidic residues; that stretch reads KGEEVGETTAQRDAKMAP. The tract at residues 124-144 is disordered; the sequence is KGEEVGETTAQRDAKMAPEKM. The PPXY motif motif lies at 172-175; the sequence is PPPY. Residues 184-214 form a disordered region; that stretch reads LAGVGEQQGQGGDTPWGAEQPRAEPGHAGLA.

The protein resides in the virion. This is Gag polyprotein (ev-1) from Galliformes.